Reading from the N-terminus, the 284-residue chain is 3-methyl-2-oxobutanoate hydroxymethyltransferase (284 aa).

Mg(2+) is bound by residues Asp-44 and Asp-83. Residues 44 to 45, Asp-83, and Lys-112 contribute to the 3-methyl-2-oxobutanoate site; that span reads DS. Glu-114 provides a ligand contact to Mg(2+). Glu-181 (proton acceptor) is an active-site residue.

The protein belongs to the PanB family. As to quaternary structure, homodecamer; pentamer of dimers. Requires Mg(2+) as cofactor.

Its subcellular location is the cytoplasm. It carries out the reaction 3-methyl-2-oxobutanoate + (6R)-5,10-methylene-5,6,7,8-tetrahydrofolate + H2O = 2-dehydropantoate + (6S)-5,6,7,8-tetrahydrofolate. It functions in the pathway cofactor biosynthesis; coenzyme A biosynthesis. With respect to regulation, neither activated nor inhibited by coenzyme A. In terms of biological role, catalyzes the reversible reaction in which hydroxymethyl group from 5,10-methylenetetrahydrofolate is transferred onto alpha-ketoisovalerate to form ketopantoate. The protein is 3-methyl-2-oxobutanoate hydroxymethyltransferase of Thermococcus kodakarensis (strain ATCC BAA-918 / JCM 12380 / KOD1) (Pyrococcus kodakaraensis (strain KOD1)).